The sequence spans 311 residues: Solute carrier family 25 member 36 (311 aa).

Solcar repeat units follow at residues 4–108, 116–203, and 224–308; these read RDTL…CKEK, DSTQ…IKQK, and SDFV…VVYL. Transmembrane regions (helical) follow at residues 7 to 27, 41 to 57, 111 to 131, 180 to 200, 226 to 246, and 291 to 311; these read LVHL…TCPL, LYIS…ASVN, GVFD…AGFT, MSAS…YESI, FVRM…IAYP, and QIPN…LLNG.

This sequence belongs to the mitochondrial carrier (TC 2.A.29) family.

The protein resides in the mitochondrion inner membrane. It carries out the reaction UTP(in) + CTP(out) = UTP(out) + CTP(in). The catalysed reaction is CTP(out) + UDP(in) = CTP(in) + UDP(out). The enzyme catalyses UMP(in) + CTP(out) = UMP(out) + CTP(in). It catalyses the reaction dUTP(in) + CTP(out) = dUTP(out) + CTP(in). It carries out the reaction dUMP(in) + CTP(out) = dUMP(out) + CTP(in). The catalysed reaction is CDP(in) + CTP(out) = CDP(out) + CTP(in). The enzyme catalyses CTP(out) + CMP(in) = CTP(in) + CMP(out). It catalyses the reaction dCTP(in) + CTP(out) = dCTP(out) + CTP(in). It carries out the reaction dCDP(in) + CTP(out) = dCDP(out) + CTP(in). The catalysed reaction is dCMP(in) + CTP(out) = dCMP(out) + CTP(in). The enzyme catalyses GTP(in) + CTP(out) = GTP(out) + CTP(in). It catalyses the reaction CTP(out) + GDP(in) = CTP(in) + GDP(out). It carries out the reaction GMP(in) + CTP(out) = GMP(out) + CTP(in). The catalysed reaction is dGTP(in) + CTP(out) = dGTP(out) + CTP(in). The enzyme catalyses dGMP(in) + CTP(out) = dGMP(out) + CTP(in). It catalyses the reaction ITP(in) + CTP(out) = ITP(out) + CTP(in). It carries out the reaction IDP(in) + CTP(out) = IDP(out) + CTP(in). The catalysed reaction is IMP(in) + CTP(out) = IMP(out) + CTP(in). The enzyme catalyses CTP(out) = CTP(in). Its function is as follows. Mitochondrial transporter that imports/exports pyrimidine nucleotides into and from mitochondria. Selectively transports cytosine, guanosine, inosine and uridine (deoxy)nucleoside mono-, di-, and triphosphates by antiport mechanism. Catalyzes uniport at much lower rate. May import (deoxy)nucleoside triphosphates in exchange for intramitochondrial (deoxy)nucleoside mono- and diphosphates, thus providing precursors necessary for de novo synthesis of mitochondrial DNA and RNA while exporting products of their catabolism. Participates in mitochondrial genome maintenance, regulation of mitochondrial membrane potential and mitochondrial respiration. The polypeptide is Solute carrier family 25 member 36 (Slc25a36) (Mus musculus (Mouse)).